Reading from the N-terminus, the 825-residue chain is Protein HIR1 (825 aa).

WD repeat units follow at residues 15–54, 75–114, 132–171, 174–213, and 227–270; these read QRNY…VFAK, RHTG…VQPL, AHDN…KIKR, VHQS…DLSF, and PLTT…TSVS. Basic and acidic residues predominate over residues 294 to 304; the sequence is HERGEEVDGAS. The interval 294–320 is disordered; sequence HERGEEVDGASKDNSAASESSGKRRLK. WD repeat units lie at residues 309–351 and 355–396; these read AASE…PIFV and LTSK…KAIP. The segment covering 574-591 has biased composition (acidic residues); the sequence is DEESMDDDAEVADEEDET. The disordered stretch occupies residues 574 to 595; sequence DEESMDDDAEVADEEDETKNEH.

This sequence belongs to the WD repeat HIR1 family.

Its subcellular location is the nucleus. Required for replication-independent chromatin assembly and for the periodic repression of histone gene transcription during the cell cycle. This is Protein HIR1 (HIR1) from Eremothecium gossypii (strain ATCC 10895 / CBS 109.51 / FGSC 9923 / NRRL Y-1056) (Yeast).